The following is a 690-amino-acid chain: MYDQDINTINVENFYNFSKQLPITPIRIVSYFLRSKFLDPKDKEEYKIRGWESRAPYVYQLLNRVGADIILLQGMNLDQCKNIISFLEPFGYNVQFRAAHSGKESREIIDDEWTGAFIGIAYSMNKFTILNKGGFWLKEDPDIPPPSIADNSENRRSVERGGTDKCFGDTHSYRYVFYETLLNIESNIPITIGTSHFPIGGINSRIKSSKLVMERLCKISDGHPLVFGGALMLFEDKDGNTAYETLTRYACDYRNSKDHYGHQTSFIGYPNDPFKVDINSNGIVSPRNLDLIFHRGLQSIRSFIMSGEFNSLEKKLVEPLIAPIKDSDKRQFASDRCLIGVDLQFNRSAKKEIFQRTLNNENSFNFSKNLSPKIIRTVNWNIRTSFLDPKDKKEYSIRGWQSRKHYVTEMLTHLAPDLILLQEMSPSQANDMKMFLNSIGYEVIFRTAHTGHDLYEIIDGEWTGALTGISYFRNRFFINCHGGFWLKDDPHTPPPLDADNAENRRPIQEGGIDKCFGDTHSYRHCQWATLLDVQSQQLITTAVSDFPIGGKDSRLKSAILCNSMLREISGENCLIFGGEICTFEDKGMDGFDTYKKITEQATDWRNTLYGHYGHQATFVGYHTDKYKVEIDNHGIVSPRNIDIIVHRGFTQGIRSFSLSGEFNPSEKKLNKPLISVVIIQKTDYFHQTIF.

This is an uncharacterized protein from Acanthamoeba polyphaga (Amoeba).